A 172-amino-acid chain; its full sequence is RNA silencing suppressor p19 (172 aa).

Residues 1 to 20 (MERAIQGNDAREQANSERWD) are compositionally biased toward basic and acidic residues. Residues 1–37 (MERAIQGNDAREQANSERWDGGSGGTTSPFKLPDESP) are disordered.

This sequence belongs to the tombusvirus protein p19 family. As to quaternary structure, homodimer.

Functionally, viral suppressor of RNA silencing which binds specifically to silencing RNAs (siRNAs). Acts as a molecular caliper to specifically select siRNAs based on the length of the duplex region of the RNA. The sequence is that of RNA silencing suppressor p19 from Tomato bushy stunt virus (strain Ja6) (TBSV).